Here is an 88-residue protein sequence, read N- to C-terminus: Acyl-CoA-binding domain-containing protein 7 (88 aa).

An ACB domain is found at 3-88 (LQADFDQAAQ…ARELIEKYGI (86 aa)). An acyl-CoA contacts are provided by residues R15, 30–34 (YGLYK), K56, and Y75.

The protein belongs to the ACBD7 family.

In terms of biological role, binds medium- and long-chain acyl-CoA esters. In Mus musculus (Mouse), this protein is Acyl-CoA-binding domain-containing protein 7 (Acbd7).